We begin with the raw amino-acid sequence, 319 residues long: GCN5-related N-acetyltransferase 5, chloroplastic (319 aa).

The transit peptide at 1–55 directs the protein to the chloroplast; it reads MAALSISLAFSVDSLKPTQSTKFGFSSSSHRYPLLYSCKSHRSNLRFAFPPSSVS. The region spanning 109–297 is the N-acetyltransferase domain; that stretch reads MWVRVMRHEE…KHLMRKKLLP (189 aa). Acetyl-CoA-binding positions include 218–220, 226–231, 258–260, and Y265; these read MTV, RRGIGW, and DEA. Residue Y265 is the Proton donor of the active site.

Belongs to the acetyltransferase family. GNAT subfamily. Oligomer. Post-translationally, autoacetylated. As to expression, expressed in green tissues.

Its subcellular location is the plastid. The protein resides in the chloroplast. The enzyme catalyses an N-terminal L-alpha-aminoacyl-[protein] + acetyl-CoA = N-terminal N(alpha)-acetyl-L-alpha-aminoacyl-[protein] + CoA + H(+). The catalysed reaction is L-lysyl-[protein] + acetyl-CoA = N(6)-acetyl-L-lysyl-[protein] + CoA + H(+). It catalyses the reaction N-terminal L-alanyl-[protein] + acetyl-CoA = N-terminal N(alpha)-acetyl-L-alanyl-[protein] + CoA + H(+). It carries out the reaction N-terminal L-seryl-[protein] + acetyl-CoA = N-terminal N(alpha)-acetyl-L-seryl-[protein] + CoA + H(+). The enzyme catalyses N-terminal L-methionyl-[protein] + acetyl-CoA = N-terminal N(alpha)-acetyl-L-methionyl-[protein] + CoA + H(+). The catalysed reaction is N-terminal L-valyl-[protein] + acetyl-CoA = N-terminal N(alpha)-acetyl-L-valyl-[protein] + CoA + H(+). It catalyses the reaction N-terminal L-threonyl-[protein] + acetyl-CoA = N-terminal N(alpha)-acetyl-L-threonyl-[protein] + CoA + H(+). Functionally, protein acetyltransferase with dual specificity triggering both N-alpha-acetylation (NTA), with a large spectrum of modified N-termini, including methionine, alanine, serine and to a lower extent threonine and valine as substrates, and epsilon-lysine acetylation (KA). This is GCN5-related N-acetyltransferase 5, chloroplastic from Arabidopsis thaliana (Mouse-ear cress).